The sequence spans 221 residues: 7-cyano-7-deazaguanine synthase (221 aa).

Residue 9–19 (YSGGMDSFTVL) coordinates ATP. Zn(2+) contacts are provided by Cys186, Cys194, Cys197, and Cys200.

The protein belongs to the QueC family. It depends on Zn(2+) as a cofactor.

It carries out the reaction 7-carboxy-7-deazaguanine + NH4(+) + ATP = 7-cyano-7-deazaguanine + ADP + phosphate + H2O + H(+). Its pathway is purine metabolism; 7-cyano-7-deazaguanine biosynthesis. In terms of biological role, catalyzes the ATP-dependent conversion of 7-carboxy-7-deazaguanine (CDG) to 7-cyano-7-deazaguanine (preQ(0)). The polypeptide is 7-cyano-7-deazaguanine synthase (Psychromonas ingrahamii (strain DSM 17664 / CCUG 51855 / 37)).